A 339-amino-acid chain; its full sequence is Phosphate acyltransferase (339 aa).

The protein belongs to the PlsX family. Homodimer. Probably interacts with PlsY.

It is found in the cytoplasm. It carries out the reaction a fatty acyl-[ACP] + phosphate = an acyl phosphate + holo-[ACP]. The protein operates within lipid metabolism; phospholipid metabolism. Functionally, catalyzes the reversible formation of acyl-phosphate (acyl-PO(4)) from acyl-[acyl-carrier-protein] (acyl-ACP). This enzyme utilizes acyl-ACP as fatty acyl donor, but not acyl-CoA. This chain is Phosphate acyltransferase, found in Aeromonas salmonicida (strain A449).